The chain runs to 595 residues: Glutamyl-tRNA(Gln) amidotransferase subunit B, mitochondrial (595 aa).

The N-terminal 114 residues, 1–114 (MPRLWYSRYL…RAPTSTVAEP (114 aa)), are a transit peptide targeting the mitochondrion. Residues 59–78 (KEEAKRSKSQSRNGRGKKQV) are disordered.

This sequence belongs to the GatB/GatE family. GatB subfamily. As to quaternary structure, subunit of the heterotrimeric GatCAB amidotransferase (AdT) complex, composed of A, B and C subunits.

Its subcellular location is the mitochondrion. It carries out the reaction L-glutamyl-tRNA(Gln) + L-glutamine + ATP + H2O = L-glutaminyl-tRNA(Gln) + L-glutamate + ADP + phosphate + H(+). Its function is as follows. Allows the formation of correctly charged Gln-tRNA(Gln) through the transamidation of misacylated Glu-tRNA(Gln) in the mitochondria. The reaction takes place in the presence of glutamine and ATP through an activated gamma-phospho-Glu-tRNA(Gln). The chain is Glutamyl-tRNA(Gln) amidotransferase subunit B, mitochondrial from Talaromyces stipitatus (strain ATCC 10500 / CBS 375.48 / QM 6759 / NRRL 1006) (Penicillium stipitatum).